The primary structure comprises 392 residues: uncharacterized protein (392 aa).

Residues 1–19 form the signal peptide; the sequence is MRRIVCPPVLFLSASLLTG. Cys20 carries the N-palmitoyl cysteine lipid modification. Residue Cys20 is the site of S-diacylglycerol cysteine attachment. Residues 148 to 173 form a disordered region; that stretch reads SSGSSGGGGGGSGSSSDGGIKNGSDE. Over residues 151-160 the composition is skewed to gly residues; the sequence is SSGGGGGGSG.

This sequence belongs to the TP013X lipoprotein family.

The protein resides in the cell membrane. This is an uncharacterized protein from Treponema pallidum (strain Nichols).